Reading from the N-terminus, the 146-residue chain is MEMDKRMKSLAMTAFFGELSTLDIMALIMSIFKRHPNNTIFSVDKDGQFMIDFEYDNYKASQYLDLTLTPISGDECKTHASSIAEQLACVDIIKEDISEYIKTTPRLKRFIKKYRNRSDTRISRDTEKLKIALAKGIDYEYIKDAC.

A helical membrane pass occupies residues 10-32; it reads LAMTAFFGELSTLDIMALIMSIF.

Belongs to the orthopoxvirus OPG112 family.

The protein localises to the host membrane. The protein resides in the host cytoplasm. Functionally, contributes to the formation of crescents and immature virions (IV). Interacts with phosphatidylinositol-3-phosphate (PI3P) and phosphatidylinositol-4-phosphate (PI4P) lipids in order to form virion membranes. Mechanistically, mediates proper formation of OPG125-hexamers, and hence the honey comb lattice and spherical immature virus. In Bos taurus (Bovine), this protein is Late protein OPG112 (OPG112).